We begin with the raw amino-acid sequence, 112 residues long: MTTVISARVSGLRSTPSKLNLVADLIRGQDVSTAVMYLKFCRKKAAFLVGKVLKSAVANARANYDVDLDSLYVKEVLVGKSFTLRRVRPRARGRACRIRKRYGSVVIRLLKR.

Belongs to the universal ribosomal protein uL22 family. As to quaternary structure, part of the 50S ribosomal subunit.

Functionally, this protein binds specifically to 23S rRNA; its binding is stimulated by other ribosomal proteins, e.g. L4, L17, and L20. It is important during the early stages of 50S assembly. It makes multiple contacts with different domains of the 23S rRNA in the assembled 50S subunit and ribosome. The globular domain of the protein is located near the polypeptide exit tunnel on the outside of the subunit, while an extended beta-hairpin is found that lines the wall of the exit tunnel in the center of the 70S ribosome. In Anaplasma marginale (strain Florida), this protein is Large ribosomal subunit protein uL22.